A 178-amino-acid chain; its full sequence is RNA pyrophosphohydrolase (178 aa).

A Nudix hydrolase domain is found at proline 18–alanine 171. Residues glycine 59 to glycine 80 carry the Nudix box motif.

It belongs to the Nudix hydrolase family. RppH subfamily. The cofactor is a divalent metal cation.

In terms of biological role, accelerates the degradation of transcripts by removing pyrophosphate from the 5'-end of triphosphorylated RNA, leading to a more labile monophosphorylated state that can stimulate subsequent ribonuclease cleavage. In Brucella canis (strain ATCC 23365 / NCTC 10854 / RM-666), this protein is RNA pyrophosphohydrolase.